The primary structure comprises 38 residues: MARPNPNKQVVELNRTSLYWGLLLIFVLAVLFSSYIFN.

A helical transmembrane segment spans residues 17 to 37 (SLYWGLLLIFVLAVLFSSYIF).

The protein belongs to the PsbL family. In terms of assembly, PSII is composed of 1 copy each of membrane proteins PsbA, PsbB, PsbC, PsbD, PsbE, PsbF, PsbH, PsbI, PsbJ, PsbK, PsbL, PsbM, PsbT, PsbX, PsbY, PsbZ, Psb30/Ycf12, at least 3 peripheral proteins of the oxygen-evolving complex and a large number of cofactors. It forms dimeric complexes.

It localises to the plastid. It is found in the chloroplast thylakoid membrane. In terms of biological role, one of the components of the core complex of photosystem II (PSII). PSII is a light-driven water:plastoquinone oxidoreductase that uses light energy to abstract electrons from H(2)O, generating O(2) and a proton gradient subsequently used for ATP formation. It consists of a core antenna complex that captures photons, and an electron transfer chain that converts photonic excitation into a charge separation. This subunit is found at the monomer-monomer interface and is required for correct PSII assembly and/or dimerization. In Tetradesmus obliquus (Green alga), this protein is Photosystem II reaction center protein L.